The following is a 395-amino-acid chain: Tubulin-like protein CetZ1 (395 aa).

GTP-binding positions include 10–14, 110–112, Glu-142, Asn-169, and Asn-187; these read QAGGK and GTG.

Belongs to the CetZ family.

The protein resides in the cytoplasm. Its function is as follows. Involved in cell shape control. Essential for the development of a rod-shaped cell type required for efficient swimming. This chain is Tubulin-like protein CetZ1, found in Haloferax volcanii (strain ATCC 29605 / DSM 3757 / JCM 8879 / NBRC 14742 / NCIMB 2012 / VKM B-1768 / DS2) (Halobacterium volcanii).